The following is a 360-amino-acid chain: A-type ATP synthase subunit C (360 aa).

Residues 1–23 (MRLLERLWGKKPSRKSDKKKKGT) are disordered. Positions 9-22 (GKKPSRKSDKKKKG) are enriched in basic residues.

Belongs to the V-ATPase V0D/AC39 subunit family. As to quaternary structure, has multiple subunits with at least A(3), B(3), C, D, E, F, H, I and proteolipid K(x).

The protein localises to the cell membrane. Its function is as follows. Component of the A-type ATP synthase that produces ATP from ADP in the presence of a proton gradient across the membrane. The sequence is that of A-type ATP synthase subunit C from Methanosarcina acetivorans (strain ATCC 35395 / DSM 2834 / JCM 12185 / C2A).